We begin with the raw amino-acid sequence, 466 residues long: Small RNA degrading nuclease 2 (466 aa).

Residues 142–298 form the Exonuclease domain; the sequence is MIAIDCEMVL…HDAEAAMKLV (157 aa). The tract at residues 426–466 is disordered; that stretch reads EENNASSKKRKRENHSKGTRDRRRCKPLSRRKQRSNVKRRR. The segment covering 445 to 466 has biased composition (basic residues); sequence RDRRRCKPLSRRKQRSNVKRRR.

This sequence belongs to the REXO1/REXO3 family.

The protein resides in the nucleus. Functionally, 3'-5' exonuclease degrading single-stranded small RNAs. This is Small RNA degrading nuclease 2 (SDN2) from Arabidopsis thaliana (Mouse-ear cress).